The sequence spans 623 residues: E3 ubiquitin-protein ligase ORTHRUS 5 (623 aa).

The segment at 12–62 adopts a PHD-type zinc-finger fold; that stretch reads DGVCMRCQVNPPSEETLTCGTCVTPWHVSCLLPESLASSTGDWECPDCSGV. The RING-type 1 zinc-finger motif lies at 129–169; sequence CSICIQLPERPVTTPCGHNFCLKCFEKWAVGQGKLTCMICR. The region spanning 258 to 407 is the YDG domain; it reads TRNQGVLVGE…HKMCRYLFVR (150 aa). The segment at 498–555 adopts an RING-type 2 zinc-finger fold; it reads CQICRKVLSLPVTTPCAHNFCKACLEAKFAGITQLRDRSNGVRKLRAKKNIMTCPCCT. Residues 580–623 are disordered; sequence KSEEEAEVAESSNISEEEGEEESEPPTKKIKMDKNSVGGTSLSA. Over residues 594-603 the composition is skewed to acidic residues; sequence SEEEGEEESE. The span at 604–613 shows a compositional bias: basic and acidic residues; sequence PPTKKIKMDK.

In terms of tissue distribution, expressed in inflorescences.

The protein resides in the nucleus. The enzyme catalyses S-ubiquitinyl-[E2 ubiquitin-conjugating enzyme]-L-cysteine + [acceptor protein]-L-lysine = [E2 ubiquitin-conjugating enzyme]-L-cysteine + N(6)-ubiquitinyl-[acceptor protein]-L-lysine.. Its pathway is protein modification; protein ubiquitination. In terms of biological role, E3 ubiquitin-protein ligase. Participates in CpG methylation-dependent transcriptional regulation and epigenetic transcriptional silencing. Mediates ubiquitination with the E2 ubiquitin-conjugating enzyme UBC11. The polypeptide is E3 ubiquitin-protein ligase ORTHRUS 5 (ORTH5) (Arabidopsis thaliana (Mouse-ear cress)).